The following is a 727-amino-acid chain: Glycerol-3-phosphate dehydrogenase, mitochondrial (727 aa).

Residues 1–42 (MAFQKVVKGTILMGGGALATVLGLSQFAHYRRKQVSLAYVEA) constitute a mitochondrion transit peptide. An FAD-binding site is contributed by 71–99 (DILVIGGGATGCGCALDAVTRGLKTALVE). Position 601 is a phosphotyrosine (tyrosine 601). 2 consecutive EF-hand domains span residues 623–658 (PDID…INVQ) and 659–694 (MDED…VHTG). Ca(2+) contacts are provided by aspartate 672, asparagine 674, asparagine 676, glutamine 678, and glutamate 683.

This sequence belongs to the FAD-dependent glycerol-3-phosphate dehydrogenase family. It depends on FAD as a cofactor.

It localises to the mitochondrion. It catalyses the reaction a quinone + sn-glycerol 3-phosphate = dihydroxyacetone phosphate + a quinol. The protein operates within polyol metabolism; glycerol degradation via glycerol kinase pathway; glycerone phosphate from sn-glycerol 3-phosphate (anaerobic route): step 1/1. Calcium-binding enhance the activity of the enzyme. Functionally, calcium-responsive mitochondrial glycerol-3-phosphate dehydrogenase which seems to be a key component of the pancreatic beta-cell glucose-sensing device. The protein is Glycerol-3-phosphate dehydrogenase, mitochondrial of Rattus norvegicus (Rat).